Consider the following 212-residue polypeptide: ATP phosphoribosyltransferase 2 (212 aa).

Belongs to the ATP phosphoribosyltransferase family. Short subfamily. In terms of assembly, heteromultimer composed of HisG and HisZ subunits.

It localises to the cytoplasm. The catalysed reaction is 1-(5-phospho-beta-D-ribosyl)-ATP + diphosphate = 5-phospho-alpha-D-ribose 1-diphosphate + ATP. Its pathway is amino-acid biosynthesis; L-histidine biosynthesis; L-histidine from 5-phospho-alpha-D-ribose 1-diphosphate: step 1/9. In terms of biological role, catalyzes the condensation of ATP and 5-phosphoribose 1-diphosphate to form N'-(5'-phosphoribosyl)-ATP (PR-ATP). Has a crucial role in the pathway because the rate of histidine biosynthesis seems to be controlled primarily by regulation of HisG enzymatic activity. In Geobacter sulfurreducens (strain ATCC 51573 / DSM 12127 / PCA), this protein is ATP phosphoribosyltransferase 2 (hisG2).